Consider the following 300-residue polypeptide: ADP-ribosyl cyclase/cyclic ADP-ribose hydrolase 1 (300 aa).

Residues 1–21 are Cytoplasmic-facing; that stretch reads MANCEFSPVSGDKPCCRLSRR. Residues 22-42 traverse the membrane as a helical; Signal-anchor for type II membrane protein segment; the sequence is AQLCLGVSILVLILVVVLAVV. At 43–300 the chain is on the extracellular side; sequence VPRWRQQWSG…PEDSSCTSEI (258 aa). Cystine bridges form between cysteine 67–cysteine 82, cysteine 99–cysteine 180, and cysteine 160–cysteine 173. The N-linked (GlcNAc...) asparagine glycan is linked to asparagine 100. Residue cysteine 119 is part of the active site. N-linked (GlcNAc...) asparagine glycosylation is present at asparagine 164. Cysteine 201 is an active-site residue. N-linked (GlcNAc...) asparagine glycosylation is found at asparagine 209 and asparagine 219. Cystine bridges form between cysteine 254–cysteine 275 and cysteine 287–cysteine 296.

This sequence belongs to the ADP-ribosyl cyclase family. Homodimer. In terms of tissue distribution, expressed at high levels in pancreas, liver, kidney, brain, testis, ovary, placenta, malignant lymphoma and neuroblastoma.

It localises to the cell surface. Its subcellular location is the membrane. It catalyses the reaction 2'-phospho-cyclic ADP-ribose + nicotinate = nicotinate-adenine dinucleotide phosphate. The enzyme catalyses NAD(+) = cyclic ADP-beta-D-ribose + nicotinamide + H(+). The catalysed reaction is NAD(+) + H2O = ADP-D-ribose + nicotinamide + H(+). It carries out the reaction cyclic ADP-beta-D-ribose + H2O = ADP-D-ribose. It catalyses the reaction NADP(+) = 2'-phospho-cyclic ADP-ribose + nicotinamide. The enzyme catalyses nicotinate + NADP(+) = nicotinate-adenine dinucleotide phosphate + nicotinamide. ATP inhibits the cADPR hydrolyzing activity. Its function is as follows. Synthesizes cyclic ADP-ribose (cADPR), a second messenger for glucose-induced insulin secretion. Synthesizes the Ca(2+) mobilizer nicotinate-adenine dinucleotide phosphate, NAADP(+), from 2'-phospho-cADPR and nicotinic acid, as well as from NADP(+) and nicotinic acid. At both pH 5.0 and pH 7.4 preferentially transforms 2'-phospho-cADPR into NAADP(+), while preferentially cleaving NADP(+) to cADPR and ADPRP rather than into NADDP(+). Has cADPR hydrolase activity. The protein is ADP-ribosyl cyclase/cyclic ADP-ribose hydrolase 1 (CD38) of Homo sapiens (Human).